Reading from the N-terminus, the 220-residue chain is Protein-L-isoaspartate O-methyltransferase (220 aa).

Residue Ser-68 is part of the active site.

The protein belongs to the methyltransferase superfamily. L-isoaspartyl/D-aspartyl protein methyltransferase family.

The protein localises to the cytoplasm. It carries out the reaction [protein]-L-isoaspartate + S-adenosyl-L-methionine = [protein]-L-isoaspartate alpha-methyl ester + S-adenosyl-L-homocysteine. In terms of biological role, catalyzes the methyl esterification of L-isoaspartyl residues in peptides and proteins that result from spontaneous decomposition of normal L-aspartyl and L-asparaginyl residues. It plays a role in the repair and/or degradation of damaged proteins. The protein is Protein-L-isoaspartate O-methyltransferase of Dictyoglomus turgidum (strain DSM 6724 / Z-1310).